A 1350-amino-acid polypeptide reads, in one-letter code: Nicotinate hydroxylase hnxS (1350 aa).

Positions 49, 54, 89, 92, 133, and 135 each coordinate [2Fe-2S] cluster. Residues 164-193 (LVGTEEETESDMGAHSGSGDTGSRSSGSCG) are disordered. The span at 180–192 (GSGDTGSRSSGSC) shows a compositional bias: low complexity. The 190-residue stretch at 256-445 (YGDAEQAWVK…TKIAVPMPSK (190 aa)) folds into the FAD-binding PCMH-type domain. FAD is bound by residues 284 to 291 (LVTGASEV), 379 to 383 (CLAGN), Asp392, and Lys455. Residues Gln793 and Phe824 each coordinate Mo-molybdopterin. Residues Glu828 and Arg906 each contribute to the substrate site. Mo-molybdopterin contacts are provided by Arg938 and Ala1107. Glu1281 (proton acceptor) is an active-site residue.

This sequence belongs to the xanthine dehydrogenase family. Requires [2Fe-2S] cluster as cofactor. FAD is required as a cofactor. The cofactor is Mo-molybdopterin.

With respect to regulation, allopurinol inhibits catalytic activity in a linear fashion. Its function is as follows. Nicotinate hydroxylase, part of the hnx cluster involved in the purine degradation. The nicotinate hydroxylase hnxS accepts nicotinate as a substrate and catalyzes the first step of nicotinate catabolism. HnxS also accepts hypoxanthine, but not xanthine, as a substrate. The major facilitator-type transporters hxnP and hxnZ are probably involved in the uptake of nicotinate-derived metabolites, and the oxidoreductases hxnT and hxnY in the further metabolism of 6-OH nicotinic acid. The protein is Nicotinate hydroxylase hnxS of Emericella nidulans (strain FGSC A4 / ATCC 38163 / CBS 112.46 / NRRL 194 / M139) (Aspergillus nidulans).